A 160-amino-acid chain; its full sequence is Protein cornichon homolog 2 (160 aa).

Over 1 to 10 (MAFTFAAFCY) the chain is Cytoplasmic. A helical transmembrane segment spans residues 11–31 (MLTLVLCASLIFFVIWHIIAF). The Lumenal portion of the chain corresponds to 32–72 (DELRTDFKNPIDQGNPARARERLKNIERICCLLRKLVVPEY). A helical membrane pass occupies residues 73–93 (SIHGLFCLMFLCAAEWVTLGL). Topologically, residues 94–138 (NIPLLFYHLWRYFHRPADGSEVMYDAVSIMNADILNYCQKESWCK) are cytoplasmic. The helical transmembrane segment at 139–159 (LAFYLLSFFYYLYSMVYTLVS) threads the bilayer. Position 160 (Phe160) is a topological domain, lumenal.

The protein belongs to the cornichon family. Acts as an auxiliary subunit for AMPA-selective glutamate receptors (AMPARs). Found in a complex with GRIA1, GRIA2, GRIA3, GRIA4, CNIH3, CACNG2, CACNG3, CACNG4, CACNG5, CACNG7 and CACNG8. Interacts with CACGN8. Interacts with GRIA1. Found in a complex with GRIA1, GRIA2, GRIA3, GRIA4, DLG4 and CACNG8. As to expression, expression is up-regulated in dorsolateral prefrontal cortex of patients with schizophrenia (postmortem brain study).

It is found in the endoplasmic reticulum membrane. The protein resides in the postsynaptic cell membrane. The protein localises to the cell projection. Its subcellular location is the dendrite. It localises to the dendritic spine. It is found in the postsynaptic density. Its function is as follows. Regulates the trafficking and gating properties of AMPA-selective glutamate receptors (AMPARs). Promotes their targeting to the cell membrane and synapses and modulates their gating properties by regulating their rates of activation, deactivation and desensitization. Blocks CACNG8-mediated resensitization of AMPA receptors. The polypeptide is Protein cornichon homolog 2 (Homo sapiens (Human)).